Consider the following 132-residue polypeptide: Small ribosomal subunit protein uS11 (132 aa).

The tract at residues 1–24 (MAAQKQAARKPRRRDRKSVPVGQA) is disordered. Positions 7–16 (AARKPRRRDR) are enriched in basic residues.

This sequence belongs to the universal ribosomal protein uS11 family. As to quaternary structure, part of the 30S ribosomal subunit. Interacts with proteins S7 and S18. Binds to IF-3.

Functionally, located on the platform of the 30S subunit, it bridges several disparate RNA helices of the 16S rRNA. Forms part of the Shine-Dalgarno cleft in the 70S ribosome. The chain is Small ribosomal subunit protein uS11 from Bifidobacterium adolescentis (strain ATCC 15703 / DSM 20083 / NCTC 11814 / E194a).